Here is a 119-residue protein sequence, read N- to C-terminus: Large ribosomal subunit protein bL20 (119 aa).

It belongs to the bacterial ribosomal protein bL20 family.

Functionally, binds directly to 23S ribosomal RNA and is necessary for the in vitro assembly process of the 50S ribosomal subunit. It is not involved in the protein synthesizing functions of that subunit. The sequence is that of Large ribosomal subunit protein bL20 from Ruthia magnifica subsp. Calyptogena magnifica.